A 576-amino-acid polypeptide reads, in one-letter code: Urease subunit alpha (576 aa).

The Urease domain occupies 132 to 576 (GGIDTHIHFI…LPMAQRYFLF (445 aa)). His137, His139, and Lys220 together coordinate Ni(2+). Lys220 carries the post-translational modification N6-carboxylysine. His222 contacts substrate. The Ni(2+) site is built by His249 and His275. The active-site Proton donor is His323. Asp363 serves as a coordination point for Ni(2+).

The protein belongs to the metallo-dependent hydrolases superfamily. Urease alpha subunit family. Heterotrimer of UreA (gamma), UreB (beta) and UreC (alpha) subunits. Three heterotrimers associate to form the active enzyme. Requires Ni cation as cofactor. In terms of processing, carboxylation allows a single lysine to coordinate two nickel ions.

The protein resides in the cytoplasm. The catalysed reaction is urea + 2 H2O + H(+) = hydrogencarbonate + 2 NH4(+). The protein operates within nitrogen metabolism; urea degradation; CO(2) and NH(3) from urea (urease route): step 1/1. The protein is Urease subunit alpha of Paenarthrobacter aurescens (strain TC1).